The primary structure comprises 147 residues: MNSFLFSLACSLLVAIPAISAQDEDAGGAGDETSEGEDTTGSDETPSTGGGGDGGNEETITAGNEDCWSKRPGWKLPDNLLTKTEFTSVDECRKMCEESAVEPSCYILQINTETNECYRNNEGDVTWSSLQYDQPNVVQWHLHACSK.

The N-terminal stretch at 1–21 (MNSFLFSLACSLLVAIPAISA) is a signal peptide. Residues 21–71 (AQDEDAGGAGDETSEGEDTTGSDETPSTGGGGDGGNEETITAGNEDCWSKR) form a disordered region. The span at 22–41 (QDEDAGGAGDETSEGEDTTG) shows a compositional bias: acidic residues. 3 disulfide bridges follow: Cys67–Cys145, Cys92–Cys117, and Cys96–Cys105.

The N-terminus is blocked. As to expression, expressed by salivary glands.

The protein localises to the secreted. Functionally, inhibits collagen-stimulated platelet aggregation (IC(50)=60 nM), dense granule release and serotonin release. Does not inhibit platelet aggregation induced by ADP, arachidonic acid, and thrombin. The polypeptide is Leech anti-platelet protein (Haementeria officinalis (Mexican leech)).